A 72-amino-acid chain; its full sequence is UPF0729 protein C18orf32 homolog (72 aa).

The necessary for its localzation to the endoplasmic reticulum and lipid droplets stretch occupies residues 1-33 (MVCIPCIVIPVLLWIFKKFLEPYIYPVVSRIWP). Residues 36–72 (AVQQSGDKNMSKVDCKGAGTNGLPTKGPTEVSDKKKD) form a disordered region.

This sequence belongs to the UPF0729 family. In terms of assembly, interacts with DERL1 and AMFR. Post-translationally, undergoes ER-associated degradation (ERAD).

The protein localises to the endoplasmic reticulum. It is found in the lipid droplet. Functionally, may activate the NF-kappa-B signaling pathway. The chain is UPF0729 protein C18orf32 homolog from Mus musculus (Mouse).